The chain runs to 396 residues: MAKAKFERTKPHVNIGTIGHVDHGKTTLTAAISKVLYDKYPTLNEKRDFASIDSAPEERQRGITINISHVEYQTEKRHYAHVDAPGHADYIKNMITGAAQMDGAILVVAATDGPMAQTREHVLLARQVGVPYLLVALNKADMVDDEELLDLVEMEVRELLSSQGFDGDEAPVVRVSGLKALEGDPEWVKSVEDLMAAVDESVPDPVRDRDKPFLMPIEDVFTITGRGTVVTGRAERGTLAINSEVEIVGIRPVQKTTVTGIEMFHKQLDEAWAGENCGLLLRGLKRDDVERGQVVVKPGSITPHTDFEANVYILSKDEGGRHNPFYSNYRPQFYFRTTDVTGVITLPEGTEMVMPGDNTEMTVALIQPIAMEEGLGFAIREGGRTVGSGRVTKIIK.

One can recognise a tr-type G domain in the interval 10–206 (KPHVNIGTIG…AVDESVPDPV (197 aa)). Residues 19 to 26 (GHVDHGKT) are G1. 19–26 (GHVDHGKT) lines the GTP pocket. Residue T26 coordinates Mg(2+). The G2 stretch occupies residues 62-66 (GITIN). Positions 83-86 (DAPG) are G3. GTP-binding positions include 83–87 (DAPGH) and 138–141 (NKAD). Positions 138–141 (NKAD) are G4. The segment at 176-178 (SGL) is G5.

Belongs to the TRAFAC class translation factor GTPase superfamily. Classic translation factor GTPase family. EF-Tu/EF-1A subfamily. In terms of assembly, monomer.

It is found in the cytoplasm. It catalyses the reaction GTP + H2O = GDP + phosphate + H(+). GTP hydrolase that promotes the GTP-dependent binding of aminoacyl-tRNA to the A-site of ribosomes during protein biosynthesis. The protein is Elongation factor Tu of Arthrobacter sp. (strain FB24).